Reading from the N-terminus, the 309-residue chain is Tagatose-6-phosphate kinase (309 aa).

Belongs to the carbohydrate kinase PfkB family. LacC subfamily.

The catalysed reaction is D-tagatofuranose 6-phosphate + ATP = D-tagatofuranose 1,6-bisphosphate + ADP + H(+). It functions in the pathway carbohydrate metabolism; D-tagatose 6-phosphate degradation; D-glyceraldehyde 3-phosphate and glycerone phosphate from D-tagatose 6-phosphate: step 1/2. The protein is Tagatose-6-phosphate kinase of Streptococcus sanguinis (strain SK36).